Reading from the N-terminus, the 186-residue chain is uncharacterized protein (186 aa).

An N-terminal signal peptide occupies residues 1-18; the sequence is MKKFFFAAALVVSGLLVG. Cysteine 19 is lipidated: N-palmitoyl cysteine. The S-diacylglycerol cysteine moiety is linked to residue cysteine 19.

The protein resides in the cell membrane. This is an uncharacterized protein from Salmonella typhimurium (strain LT2 / SGSC1412 / ATCC 700720).